Here is a 346-residue protein sequence, read N- to C-terminus: Dihydroorotase (346 aa).

Positions 13 and 15 each coordinate Zn(2+). Substrate-binding positions include His15–Arg17 and Asn41. Residues Lys99, His136, and His174 each contribute to the Zn(2+) site. Residue Lys99 is modified to N6-carboxylysine. His136 is a substrate binding site. Residue Leu219 coordinates substrate. Residue Asp247 participates in Zn(2+) binding. The active site involves Asp247. Substrate-binding residues include His251 and Ala263.

The protein belongs to the metallo-dependent hydrolases superfamily. DHOase family. Class II DHOase subfamily. In terms of assembly, homodimer. Requires Zn(2+) as cofactor.

The catalysed reaction is (S)-dihydroorotate + H2O = N-carbamoyl-L-aspartate + H(+). It functions in the pathway pyrimidine metabolism; UMP biosynthesis via de novo pathway; (S)-dihydroorotate from bicarbonate: step 3/3. Catalyzes the reversible cyclization of carbamoyl aspartate to dihydroorotate. The sequence is that of Dihydroorotase from Picosynechococcus sp. (strain ATCC 27264 / PCC 7002 / PR-6) (Agmenellum quadruplicatum).